Consider the following 687-residue polypeptide: DNA ligase (687 aa).

Residues 34–38 (DAEYD), 83–84 (SL), and Glu117 each bind NAD(+). Lys119 serves as the catalytic N6-AMP-lysine intermediate. Positions 140, 182, 298, and 322 each coordinate NAD(+). Zn(2+) contacts are provided by Cys416, Cys419, Cys434, and Cys439. The region spanning 609-687 (EARGPFAGKT…EEEFVRLLKE (79 aa)) is the BRCT domain.

This sequence belongs to the NAD-dependent DNA ligase family. LigA subfamily. The cofactor is Mg(2+). Mn(2+) serves as cofactor.

It carries out the reaction NAD(+) + (deoxyribonucleotide)n-3'-hydroxyl + 5'-phospho-(deoxyribonucleotide)m = (deoxyribonucleotide)n+m + AMP + beta-nicotinamide D-nucleotide.. DNA ligase that catalyzes the formation of phosphodiester linkages between 5'-phosphoryl and 3'-hydroxyl groups in double-stranded DNA using NAD as a coenzyme and as the energy source for the reaction. It is essential for DNA replication and repair of damaged DNA. This Anaeromyxobacter sp. (strain K) protein is DNA ligase.